The following is a 45-amino-acid chain: Large ribosomal subunit protein bL34 (45 aa).

2 stretches are compositionally biased toward basic residues: residues 1-15 (MKAK…RKRA) and 22-45 (MKTK…IAIK). Residues 1 to 45 (MKAKSHLSNKKRKRASGFLARMKTKAGRKILARRRAKGRKRIAIK) are disordered.

The protein belongs to the bacterial ribosomal protein bL34 family.

This chain is Large ribosomal subunit protein bL34, found in Sulfurihydrogenibium sp. (strain YO3AOP1).